Consider the following 476-residue polypeptide: uncharacterized protein (476 aa).

Belongs to the herpesviridae US22 family.

This is an uncharacterized protein from Homo sapiens (Human).